A 347-amino-acid polypeptide reads, in one-letter code: N-acetyl-gamma-glutamyl-phosphate reductase (347 aa).

The active site involves Cys150.

Belongs to the NAGSA dehydrogenase family. Type 1 subfamily.

It localises to the cytoplasm. The enzyme catalyses N-acetyl-L-glutamate 5-semialdehyde + phosphate + NADP(+) = N-acetyl-L-glutamyl 5-phosphate + NADPH + H(+). It functions in the pathway amino-acid biosynthesis; L-arginine biosynthesis; N(2)-acetyl-L-ornithine from L-glutamate: step 3/4. In terms of biological role, catalyzes the NADPH-dependent reduction of N-acetyl-5-glutamyl phosphate to yield N-acetyl-L-glutamate 5-semialdehyde. This chain is N-acetyl-gamma-glutamyl-phosphate reductase, found in Leifsonia xyli subsp. xyli (strain CTCB07).